A 126-amino-acid chain; its full sequence is Aspartate 1-decarboxylase (126 aa).

Residue serine 25 is the Schiff-base intermediate with substrate; via pyruvic acid of the active site. Serine 25 carries the post-translational modification Pyruvic acid (Ser). Position 57 (threonine 57) interacts with substrate. Catalysis depends on tyrosine 58, which acts as the Proton donor. 73 to 75 (GAA) is a binding site for substrate.

The protein belongs to the PanD family. As to quaternary structure, heterooctamer of four alpha and four beta subunits. The cofactor is pyruvate. Post-translationally, is synthesized initially as an inactive proenzyme, which is activated by self-cleavage at a specific serine bond to produce a beta-subunit with a hydroxyl group at its C-terminus and an alpha-subunit with a pyruvoyl group at its N-terminus.

It is found in the cytoplasm. It carries out the reaction L-aspartate + H(+) = beta-alanine + CO2. Its pathway is cofactor biosynthesis; (R)-pantothenate biosynthesis; beta-alanine from L-aspartate: step 1/1. Its function is as follows. Catalyzes the pyruvoyl-dependent decarboxylation of aspartate to produce beta-alanine. In Tolumonas auensis (strain DSM 9187 / NBRC 110442 / TA 4), this protein is Aspartate 1-decarboxylase.